A 706-amino-acid chain; its full sequence is Ribosomal RNA large subunit methyltransferase K/L (706 aa).

Positions 43–154 (LMYQSLLWSR…RDMASVALDL (112 aa)) constitute a THUMP domain.

It belongs to the methyltransferase superfamily. RlmKL family.

It localises to the cytoplasm. The enzyme catalyses guanosine(2445) in 23S rRNA + S-adenosyl-L-methionine = N(2)-methylguanosine(2445) in 23S rRNA + S-adenosyl-L-homocysteine + H(+). The catalysed reaction is guanosine(2069) in 23S rRNA + S-adenosyl-L-methionine = N(2)-methylguanosine(2069) in 23S rRNA + S-adenosyl-L-homocysteine + H(+). Functionally, specifically methylates the guanine in position 2445 (m2G2445) and the guanine in position 2069 (m7G2069) of 23S rRNA. The chain is Ribosomal RNA large subunit methyltransferase K/L from Yersinia pseudotuberculosis serotype IB (strain PB1/+).